A 223-amino-acid polypeptide reads, in one-letter code: UPF0441 protein YgiB (223 aa).

Over residues 178–195 the composition is skewed to low complexity; it reads TVPKTAMAPKPATTTTVT. The segment at 178-223 is disordered; the sequence is TVPKTAMAPKPATTTTVTRGGFGESVAKQSTMQRSATGTSSRSMGG. Over residues 204–223 the composition is skewed to polar residues; it reads AKQSTMQRSATGTSSRSMGG.

It belongs to the UPF0441 family.

This Shigella flexneri serotype 5b (strain 8401) protein is UPF0441 protein YgiB.